The sequence spans 212 residues: Uracil phosphoribosyltransferase (212 aa).

5-phospho-alpha-D-ribose 1-diphosphate is bound by residues R78, R103, and 130–138 (DPMLATGSS). Residues I193 and 198–200 (GDA) contribute to the uracil site. Residue D199 participates in 5-phospho-alpha-D-ribose 1-diphosphate binding.

Belongs to the UPRTase family. It depends on Mg(2+) as a cofactor.

The catalysed reaction is UMP + diphosphate = 5-phospho-alpha-D-ribose 1-diphosphate + uracil. It functions in the pathway pyrimidine metabolism; UMP biosynthesis via salvage pathway; UMP from uracil: step 1/1. Allosterically activated by GTP. In terms of biological role, catalyzes the conversion of uracil and 5-phospho-alpha-D-ribose 1-diphosphate (PRPP) to UMP and diphosphate. This is Uracil phosphoribosyltransferase from Pseudomonas fluorescens (strain Pf0-1).